A 562-amino-acid chain; its full sequence is Serine palmitoyltransferase 2 (562 aa).

Residues 67-87 (PMLVAVLTYVGYGVLTLFGYL) form a helical membrane-spanning segment. The residue at position 379 (K379) is an N6-(pyridoxal phosphate)lysine.

The protein belongs to the class-II pyridoxal-phosphate-dependent aminotransferase family. In terms of assembly, component of the serine palmitoyltransferase (SPT) complex, which is composed of SPTLC1, SPTLC2 or SPTLC3 and SPTSSA or SPTSSB. The heterodimer consisting of SPTLC1 and SPTLC2/SPTLC3 forms the catalytic core of the enzyme, while SPTSSA or SPTSSB subunits determine substrate specificity. SPT also interacts with ORMDL proteins, especially ORMDL3, which negatively regulate SPT activity in the presence of ceramides. Forms dimers of heterodimers with SPTLC1. It depends on pyridoxal 5'-phosphate as a cofactor. In terms of tissue distribution, widely expressed.

It localises to the endoplasmic reticulum membrane. The catalysed reaction is L-serine + hexadecanoyl-CoA + H(+) = 3-oxosphinganine + CO2 + CoA. It catalyses the reaction octadecanoyl-CoA + L-serine + H(+) = 3-oxoeicosasphinganine + CO2 + CoA. The protein operates within lipid metabolism; sphingolipid metabolism. With respect to regulation, SPT complex catalytic activity is negatively regulated by ORMDL proteins, including ORMDL3, in the presence of ceramides. This mechanism allows to maintain ceramide levels at sufficient concentrations for the production of complex sphingolipids, but which prevents the accumulation of ceramides to levels that trigger apoptosis. In terms of biological role, component of the serine palmitoyltransferase multisubunit enzyme (SPT) that catalyzes the initial and rate-limiting step in sphingolipid biosynthesis by condensing L-serine and activated acyl-CoA (most commonly palmitoyl-CoA) to form long-chain bases. The SPT complex is composed of SPTLC1, SPTLC2 or SPTLC3 and SPTSSA or SPTSSB. Within this complex, the heterodimer consisting of SPTLC1 and SPTLC2/SPTLC3 forms the catalytic core. The composition of the serine palmitoyltransferase (SPT) complex determines the substrate preference. The SPTLC1-SPTLC2-SPTSSA complex shows a strong preference for C16-CoA substrate, while the SPTLC1-SPTLC3-SPTSSA isozyme uses both C14-CoA and C16-CoA as substrates, with a slight preference for C14-CoA. The SPTLC1-SPTLC2-SPTSSB complex shows a strong preference for C18-CoA substrate, while the SPTLC1-SPTLC3-SPTSSB isozyme displays an ability to use a broader range of acyl-CoAs, without apparent preference. Crucial for adipogenesis. This Homo sapiens (Human) protein is Serine palmitoyltransferase 2.